The primary structure comprises 391 residues: Testis-expressed protein 9 (391 aa).

Disordered regions lie at residues 1–31 and 65–85; these read MAGRSLCLTRSSVPGTPFPPPVQQPSTPGPD and QEVRSRPVSTQMKSCDDEDDY. Residues 188–351 are a coiled coil; the sequence is IGTEAQIRFL…EKQKGELMIG (164 aa).

Its subcellular location is the cytoplasm. It is found in the cytoskeleton. It localises to the microtubule organizing center. The protein resides in the centrosome. The protein localises to the centriolar satellite. This chain is Testis-expressed protein 9 (TEX9), found in Homo sapiens (Human).